A 275-amino-acid polypeptide reads, in one-letter code: MANFTAADVKRLRELTGAGMLDCKNALAESDGDFDKAVEALRIKGAKDVGKRAERATAEGLVAAQGGALIELNSETDFVAKNAEFQALADQIVAAAASSKAADVDALKAAKIGDTTVEQAIAELSAKIGEKLELRRVAHFDGTVEAYLHRRAADLPPAVGVLVEYQGSGKDSDKEAAHAVALQIAALKARYLSRDDVPEDVVASERRIAEETAKAEGKPEQALPKIVEGRLNGFFKDAVLLEQPSVSDSKKTVKALLDEAGVTVTRFVRFEVGQA.

The segment at 76-79 (TDFV) is involved in Mg(2+) ion dislocation from EF-Tu.

It belongs to the EF-Ts family.

Its subcellular location is the cytoplasm. Functionally, associates with the EF-Tu.GDP complex and induces the exchange of GDP to GTP. It remains bound to the aminoacyl-tRNA.EF-Tu.GTP complex up to the GTP hydrolysis stage on the ribosome. In Mycobacterium avium (strain 104), this protein is Elongation factor Ts.